Reading from the N-terminus, the 342-residue chain is Delta(6)-protoilludene synthase (342 aa).

Mg(2+)-binding residues include Asp81, Asn217, Ser221, and Glu225. A DDXXD motif motif is present at residues 81–85; sequence DEYSD. The (2E,6E)-farnesyl diphosphate site is built by Arg306 and Tyr307.

It belongs to the terpene synthase family. Mg(2+) serves as cofactor.

The enzyme catalyses (2E,6E)-farnesyl diphosphate = Delta(6)-protoilludene + diphosphate. Its function is as follows. Delta(6)-protoilludene synthase, part of the gene cluster that mediates the biosynthesis of melleolides, a range of antifungal and phytotoxic polyketide derivatives composed of an orsellinic acid (OA) moiety esterified to various sesquiterpene alcohols. The first step in melleolides biosynthesis is performed by the delta(6)-protoilludene synthase PRO1 which catalyzes the cyclization of farnesyl diphosphate to protoilludene. The orsellinic acid synthase armB produces OA by condensing acetyl-CoA with 3 malonyl-CoA units in a three-round chain elongation reaction folowed by a C2-C7 ring closure. ArmB further catalyzes the trans-esterification of OA to the various sesquiterpene alcohols resulting from the hydroxylation of protoilludene. The melleolides cluster also includes 5 cytochrome P450 monooxygenases, 4 NAD(+)-dependent oxidoreductases, one flavin-dependent oxidoreductase, and one O-methyltransferase. The cytochrome P450 monooxygenases may be involved in protoilludene hydroxylation to elaborate melleolides with multiple alcohol groups, such as melleolide D, which carries alcohol functionalities at C-4, C-5, C-10, and C-13. The role of the NAD(+)-dependent enzymes remains unknown. Numerous melleolides, including arnamial, show 5'-O-methylation of the aromatic moiety which may be catalyzed by the methyltransferase encoded in the cluster. The flavin-dependent oxidoreductase might represent the dehydrogenase yielding the aldehyde in position 1 of arnamial and other melleolides. Finally, several halogenases, localized outside of the cluster, are able to catalyze the transfer of a single chlorine atom to the melleolide backbone, resulting in a 6'-chloromelleolide product. The sequence is that of Delta(6)-protoilludene synthase from Armillaria ostoyae (Armillaria root rot fungus).